We begin with the raw amino-acid sequence, 66 residues long: Large ribosomal subunit protein bL32 (66 aa).

Belongs to the bacterial ribosomal protein bL32 family.

The protein is Large ribosomal subunit protein bL32 of Rickettsia canadensis (strain McKiel).